We begin with the raw amino-acid sequence, 921 residues long: Probable dipeptidyl-aminopeptidase B (921 aa).

The interval 1–33 is disordered; the sequence is MAGHTEENAQLLSTEQESVSRHSSDSAASTAST. The Cytoplasmic portion of the chain corresponds to 1-109; that stretch reads MAGHTEENAQ…NKSVDKKLRK (109 aa). Residues 8–17 are compositionally biased toward polar residues; it reads NAQLLSTEQE. Residues 110 to 130 form a helical; Signal-anchor for type II membrane protein membrane-spanning segment; that stretch reads LIWIVGGVFIGAWVLALFIFL. At 131-921 the chain is on the vacuolar side; the sequence is GKQAYKHSSE…VPLQIDAAKV (791 aa). The N-linked (GlcNAc...) asparagine glycan is linked to Asn-362. Ser-768 functions as the Charge relay system in the catalytic mechanism. Asn-822 carries N-linked (GlcNAc...) asparagine glycosylation. Active-site charge relay system residues include Asp-845 and His-878.

The protein belongs to the peptidase S9B family.

It localises to the vacuole membrane. It carries out the reaction Release of an N-terminal dipeptide, Xaa-Yaa-|-Zaa-, from a polypeptide, preferentially when Yaa is Pro, provided Zaa is neither Pro nor hydroxyproline.. Type IV dipeptidyl-peptidase which removes N-terminal dipeptides sequentially from polypeptides having unsubstituted N-termini provided that the penultimate residue is proline. The polypeptide is Probable dipeptidyl-aminopeptidase B (dapB) (Sclerotinia sclerotiorum (strain ATCC 18683 / 1980 / Ss-1) (White mold)).